A 269-amino-acid polypeptide reads, in one-letter code: Sulfur carrier protein FdhD (269 aa).

The active-site Cysteine persulfide intermediate is the C111.

This sequence belongs to the FdhD family.

Its subcellular location is the cytoplasm. In terms of biological role, required for formate dehydrogenase (FDH) activity. Acts as a sulfur carrier protein that transfers sulfur from IscS to the molybdenum cofactor prior to its insertion into FDH. This is Sulfur carrier protein FdhD from Brucella abortus biovar 1 (strain 9-941).